Reading from the N-terminus, the 60-residue chain is Small ribosomal subunit protein bS21 (60 aa).

Positions arginine 35–arginine 60 are disordered. Basic residues predominate over residues valine 43–arginine 60.

This sequence belongs to the bacterial ribosomal protein bS21 family.

In Clostridium novyi (strain NT), this protein is Small ribosomal subunit protein bS21.